The sequence spans 680 residues: Extracellular matrix protein 2 (680 aa).

The first 20 residues, methionine 1–glycine 20, serve as a signal peptide directing secretion. Residues glycine 100 to serine 157 enclose the VWFC domain. Residues glutamine 189 to lysine 198 are compositionally biased toward acidic residues. Residues glutamine 189–glycine 293 form a disordered region. A compositionally biased stretch (basic and acidic residues) spans glutamine 223–glutamine 238. Acidic residues predominate over residues asparagine 249–glutamate 272. Positions arginine 275–aspartate 277 match the Cell attachment site motif. An LRRNT domain is found at proline 288–glutamate 325. LRR repeat units lie at residues asparagine 349–alanine 369, asparagine 375–threonine 396, leucine 397–aspartate 417, glutamine 420–alanine 440, serine 446–alanine 466, serine 467–histidine 488, lysine 491–alanine 511, asparagine 517–serine 538, leucine 539–histidine 559, glycine 563–serine 583, serine 590–methionine 611, alanine 613–asparagine 634, and asparagine 642–cysteine 665. Asparagine 359 carries an N-linked (GlcNAc...) asparagine glycan. An N-linked (GlcNAc...) asparagine glycan is attached at asparagine 430. Asparagine 487 carries N-linked (GlcNAc...) asparagine glycosylation.

This sequence belongs to the small leucine-rich proteoglycan (SLRP) family. SLRP class I subfamily. As to quaternary structure, interacts with numerous extracellular matrix proteins. Interacts with MSL1 and RASSF1.

Its subcellular location is the secreted. It localises to the extracellular space. It is found in the extracellular matrix. Its function is as follows. Promotes matrix assembly and cell adhesiveness. The polypeptide is Extracellular matrix protein 2 (ECM2) (Bos taurus (Bovine)).